We begin with the raw amino-acid sequence, 328 residues long: D-cysteine desulfhydrase (328 aa).

An N6-(pyridoxal phosphate)lysine modification is found at Lys-51.

Belongs to the ACC deaminase/D-cysteine desulfhydrase family. Homodimer. It depends on pyridoxal 5'-phosphate as a cofactor.

It carries out the reaction D-cysteine + H2O = hydrogen sulfide + pyruvate + NH4(+) + H(+). In terms of biological role, catalyzes the alpha,beta-elimination reaction of D-cysteine and of several D-cysteine derivatives. It could be a defense mechanism against D-cysteine. The chain is D-cysteine desulfhydrase from Escherichia coli (strain SMS-3-5 / SECEC).